Reading from the N-terminus, the 482-residue chain is MPQKIVVVGAGPVGSLAALYAAVRGHDVEIYELRSDLRNSEHSSNISQSINLALSERGINSLRKTGLPDLADAVLAETFPMHGRMIHVRKHGQYVRQAQAYDAHGRNLLAMDRTGLNKTLLDHLNSMPNVTFFFHRKLVSVDFRKKLAWFENRTKTDPAKSDDIEVSFDLMIGADGAHSAVRYHLMKFVPMSYQQEYIDKLWCQFHVPPSDKGDFRIPPNYLHIWPQDDAMFIALPNLDKSFTSTLFLTRSGFEELVASGKVVEYFDEKFPGVVPELITEDELRKQFNEHDHFPLISIKCSPYHFGSTGVIVGDSAHAMVPFYGQGMNAGLEDVRVLFEILDKYPGDQAKALSEYSEQRTPDAQTINDLALGNYREMASDVKKPLYLLRKWIEEKLYIYVPSAGWATQYSRVTFSNMRYSEVQAAAQRQAKILNGIVGVTTLSLIGSAALWLGRTGGLQQAKQNILRSICLLAQQAQKVTKG.

It belongs to the aromatic-ring hydroxylase family. KMO subfamily. FAD is required as a cofactor.

Its subcellular location is the mitochondrion outer membrane. It catalyses the reaction L-kynurenine + NADPH + O2 + H(+) = 3-hydroxy-L-kynurenine + NADP(+) + H2O. It participates in cofactor biosynthesis; NAD(+) biosynthesis; quinolinate from L-kynurenine: step 1/3. Catalyzes the hydroxylation of L-kynurenine (L-Kyn) to form 3-hydroxy-L-kynurenine (L-3OHKyn). Required for synthesis of quinolinic acid. This chain is Kynurenine 3-monooxygenase, found in Phaeosphaeria nodorum (strain SN15 / ATCC MYA-4574 / FGSC 10173) (Glume blotch fungus).